A 334-amino-acid polypeptide reads, in one-letter code: Cytochrome c biogenesis protein CcsA (334 aa).

8 helical membrane-spanning segments follow: residues 12–32, 35–55, 67–87, 96–116, 141–161, 242–262, 277–297, and 303–323; these read NTAFLVLLLTMFAYWVAVVFP, WLVQGASGAMAIANLTITALL, ISNLYESLFFLAWGITAVHFI, FVGAVTSPIALGIVAFAALTL, VMMVSYATLMVGSLLAIAFLF, IIGLGFPLLTIGIIAGAVWAN, WALITWLVFAAYLHARITKGW, and AILAASGFTVVWICYLGVNLL.

This sequence belongs to the CcmF/CycK/Ccl1/NrfE/CcsA family. In terms of assembly, may interact with ccs1.

Its subcellular location is the cellular thylakoid membrane. In terms of biological role, required during biogenesis of c-type cytochromes (cytochrome c6 and cytochrome f) at the step of heme attachment. The protein is Cytochrome c biogenesis protein CcsA of Synechocystis sp. (strain ATCC 27184 / PCC 6803 / Kazusa).